The primary structure comprises 378 residues: MQVEVDLVIKMIGMIVIGALIGAVTNHLAIRMLFRPLEAKYIGKYRIPFTPGLIPKRRDELAANLGRTVVKHLLTPEGISKRLQQPIVYQAITRMIQQEVQKWTRSTKTIREIAERFVANPEGKLQQQIEQRIDQELESMAVAIKTARLTEVLGEGGTTKIKTAIPGMVEVLLHQTEQYFDSPAGKMKLEETVAQFIQSKLGGGMFGMLLANVNIVEMIQPELKRVIQGKSTHQFISEMVEQEVHTLLERTVGSLLEPEAERQIIERMKSEIVTRIPLAALLDTPLHEFLEPLEVRISQEMVPMLSKQMVNRLIEQVEQIMATLDLETIVREEVDLLDTAYLEEIVLSISRREFRAITWLGGLLGGLIGMIQAILLIV.

Helical transmembrane passes span 5–25 (VDLVIKMIGMIVIGALIGAVT) and 357–377 (ITWLGGLLGGLIGMIQAILLI).

This sequence belongs to the UPF0754 family.

The protein localises to the cell membrane. This Exiguobacterium sibiricum (strain DSM 17290 / CCUG 55495 / CIP 109462 / JCM 13490 / 255-15) protein is UPF0754 membrane protein Exig_0680.